The sequence spans 338 residues: RAB6-interacting golgin (338 aa).

Composition is skewed to basic and acidic residues over residues 1–14 and 46–59; these read MTEKFNGFSHDEIL and RMPDKIFRQADQLR. Disordered stretches follow at residues 1–109 and 127–188; these read MTEK…LNLD and ARDK…SPFK. Low complexity-rich tracts occupy residues 60-73 and 153-167; these read KQQQQQPQQPIQKP and SGGDSQTTSSTDDGS. Residues 192 to 244 are a coiled coil; that stretch reads LKDFEQHRRMIEEQNKQKKQMLYQAIEQHTQKTAAESRKIEEIRHELSKLESD. The interval 244–260 is essential for Sas-6 binding; the sequence is DLAVDVALLRKQIDNAC. Residues 246 to 286 form a necessary for localization to the centrosome region; it reads AVDVALLRKQIDNACIHFANVEKQYVKIEAQFLRAKIELHN. Positions 246–323 are necessary for localization to the Golgi; that stretch reads AVDVALLRKQ…TELMQKVGLS (78 aa). The tract at residues 260–286 is necessary for interaction with Sas-6 and essential for homodimerization; it reads CIHFANVEKQYVKIEAQFLRAKIELHN.

Belongs to the GORAB family. In terms of assembly, homodimer (via C-terminus); dimerization appears to be required for its trans-Golgi localization but not for its function and centriolar localization. Interacts (via C-terminus) with Rab6; binds Rab6 as a homodimer, this interaction seems to be required for trans-Golgi localization. Interacts (via C-terminus) with Sas-6; binds as a monomer to a Sas-6 homodimer.

The protein resides in the cytoplasm. Its subcellular location is the cytoskeleton. It is found in the microtubule organizing center. The protein localises to the centrosome. It localises to the centriole. The protein resides in the golgi apparatus. Its subcellular location is the trans-Golgi network. Required for centriole duplication likely through its interaction with Sas-6. During embryogenesis, maternally provided protein is required for centrosome duplication and nuclear division cycles of the syncytial embryos. In femoral chordotonal organs, required for sensory cilia structural integrity and functionality necessary for motor coordination. In male germline, has a role in cytokinesis which seems dependent on its localization to the Golgi. The protein is RAB6-interacting golgin of Drosophila melanogaster (Fruit fly).